The sequence spans 182 residues: Transcription repressor OFP11 (182 aa).

A disordered region spans residues P62 to S94. Residues M104–W169 enclose the OVATE domain.

As to expression, expressed in roots, rosette and cauline leaves, shoots, stems, flower buds and siliques.

Its subcellular location is the nucleus. Its function is as follows. Transcriptional repressor that may regulate multiple aspects of plant growth and development through the regulation of BEL1-LIKE (BLH) and KNOX TALE (KNAT) homeodomain transcription factors. The protein is Transcription repressor OFP11 (OFP11) of Arabidopsis thaliana (Mouse-ear cress).